Reading from the N-terminus, the 1132-residue chain is Phospholipid-transporting ATPase IG (1132 aa).

Over 1–66 (MQMVPSLPPA…NFLPKNLFEQ (66 aa)) the chain is Cytoplasmic. A helical transmembrane segment spans residues 67 to 85 (FRRIANFYFLIIFLVQVTV). Aspartate 86 is a topological domain (extracellular). Residues 87–107 (TPTSPVTSGLPLFFVITVTAI) form a helical membrane-spanning segment. The Cytoplasmic portion of the chain corresponds to 108-290 (KQGYEDCLRH…SQKRSAVEKS (183 aa)). A helical transmembrane segment spans residues 291 to 311 (INAFLIVYLFILLTKAAVCTT). Residues 312-346 (LKYVWQSTPYNDEPWYNQKTQKERETLKVLKMFTD) are Extracellular-facing. A helical membrane pass occupies residues 347-367 (FLSFMVLFNFIIPVSMYVTVE). Over 368-879 (MQKFLGSFFI…YVRIAHLVQY (512 aa)) the chain is Cytoplasmic. Aspartate 412 functions as the 4-aspartylphosphate intermediate in the catalytic mechanism. 3 residues coordinate ATP: aspartate 412, lysine 413, and threonine 414. Aspartate 412 contributes to the Mg(2+) binding site. Residue threonine 414 participates in Mg(2+) binding. At serine 445 the chain carries Phosphoserine. ATP contacts are provided by glutamate 501, phenylalanine 543, lysine 566, arginine 597, threonine 677, glycine 678, aspartate 679, arginine 792, and lysine 798. Aspartate 819 serves as a coordination point for Mg(2+). ATP is bound by residues asparagine 822 and aspartate 823. A Mg(2+)-binding site is contributed by aspartate 823. The helical transmembrane segment at 880 to 900 (FFYKNLCFILPQFLYQFFCGF) threads the bilayer. The Extracellular segment spans residues 901-908 (SQQPLYDA). The helical transmembrane segment at 909–929 (AYLTMYNICFTSLPILAYSLL) threads the bilayer. At 930–955 (EQHINIDTLTSDPRLYMKISGNAMLQ) the chain is on the cytoplasmic side. The helical transmembrane segment at 956–976 (LGPFLYWTFLAAFEGTVFFFG) threads the bilayer. Residues 977 to 995 (TYFLFQTASLEENGKVYGN) are Extracellular-facing. The helical transmembrane segment at 996 to 1016 (WTFGTIVFTVLVFTVTLKLAL) threads the bilayer. The Cytoplasmic portion of the chain corresponds to 1017–1026 (DTRFWTWINH). The chain crosses the membrane as a helical span at residues 1027–1047 (FVIWGSLAFYVFFSFFWGGII). Residues 1048-1069 (WPFLKQQRMYFVFAQMLSSVST) are Extracellular-facing. A helical transmembrane segment spans residues 1070–1090 (WLAIILLIFISLFPEILLIVL). Residues 1091-1132 (KNVRRRSARRNLSCRRASDSLSARPSVRPLLLRTFSDESNVL) are Cytoplasmic-facing. Phosphoserine is present on residues serine 1108, serine 1116, and serine 1126. A Di-leucine motif motif is present at residues 1116–1121 (SVRPLL).

Belongs to the cation transport ATPase (P-type) (TC 3.A.3) family. Type IV subfamily. In terms of assembly, component of a P4-ATPase flippase complex which consists of a catalytic alpha subunit ATP11C and an accessory beta subunit TMEM30A. Mg(2+) is required as a cofactor. Post-translationally, proteolytically cleaved by CASP3, CASP6 and CASP7. Phosphorylated at Ser-1116 likely by PRKCA; this creates a functional di-leucine motif that is sufficient for endocytosis. Widely expressed.

It localises to the cell membrane. Its subcellular location is the endoplasmic reticulum membrane. The protein localises to the early endosome membrane. The protein resides in the recycling endosome membrane. It catalyses the reaction ATP + H2O + phospholipidSide 1 = ADP + phosphate + phospholipidSide 2.. The catalysed reaction is a 1,2-diacyl-sn-glycero-3-phospho-L-serine(out) + ATP + H2O = a 1,2-diacyl-sn-glycero-3-phospho-L-serine(in) + ADP + phosphate + H(+). The enzyme catalyses a 1,2-diacyl-sn-glycero-3-phosphoethanolamine(out) + ATP + H2O = a 1,2-diacyl-sn-glycero-3-phosphoethanolamine(in) + ADP + phosphate + H(+). Its activity is regulated as follows. The flippase activity is inactivated by caspase-mediated cleavage in apoptotic cells, allowing for PS exposure on the cell surface and engulfment of apoptotic cells by macrophages. The ATPase activity is up-regulated by aminophospholipids PS and PE and down-regulated by Increasing intracellular Ca2+ levels. Its function is as follows. Catalytic component of a P4-ATPase flippase complex which catalyzes the hydrolysis of ATP coupled to the transport of aminophospholipids, phosphatidylserines (PS) and phosphatidylethanolamines (PE), from the outer to the inner leaflet of the plasma membrane. Major PS-flippase in immune cell subsets. In erythrocyte plasma membrane, it is required to maintain PS in the inner leaflet preventing its exposure on the surface. This asymmetric distribution is critical for the survival of erythrocytes in circulation since externalized PS is a phagocytic signal for erythrocyte clearance by splenic macrophages. Required for B cell differentiation past the pro-B cell stage. Seems to mediate PS flipping in pro-B cells. May be involved in the transport of cholestatic bile acids. This is Phospholipid-transporting ATPase IG from Homo sapiens (Human).